The chain runs to 306 residues: MTDNAPQLALRDVAARQLANATKTVPQLRTITPRWLVRLLHWTPVEAGIYRVNQVKDASQITVACSERDESELPETFVDYIDNPREYLLSAVNTVVDVHTRISDLYSNPHDQIREQLRLTIEIMKERQESELINSREYGLLNNVAPGQLVHTRNGAPTPDDLDELLIRVWKEPAFFLAHPQAIAAFGRECTRRGVPPATVSLFGSSFITWRGVPLIPSDKVPLENGKTKILLLRVGESRQGVVGLYQPNLPGEQGMGLSVRFMGINRKALASYLVSLYCSLAVLTDDALAVLDNVDVTQYHTYRYN.

The protein belongs to the encapsulin family. Family 2A subfamily. The 24.5 nm encapsulin nanocompartment is formed by 60 subunits; monomers form pentamers which assemble to form shells. There are 12 positively charged pores where the pentamers meet with a minimal pore diameter of 3.7 Angstroms as well 3-fold axis channels and dimer channels.

Its subcellular location is the encapsulin nanocompartment. Functionally, shell component of a type 2A encapsulin nanocompartment. Expression in E.coli generates nanocompartments with an average diameter of 25 nm. They can be disassembled by treatment with 6M guanidine hydrochloride and reassembled with cargo. The nanocompartment is probably involved in sulfur metabolism. Probably allows passage of cysteine into its interior; during growth in light the physiological pH is 8-8.4, about 30-54% of free cysteine (charge -1) would be able to pass through the shell. The sequence is that of Type 2A encapsulin shell protein SrpI from Synechococcus elongatus (strain ATCC 33912 / PCC 7942 / FACHB-805) (Anacystis nidulans R2).